Here is a 249-residue protein sequence, read N- to C-terminus: Proteasome subunit alpha type-4 (249 aa).

It belongs to the peptidase T1A family. The 26S proteasome consists of a 20S proteasome core and two 19S regulatory subunits. The 20S proteasome core is composed of 28 subunits that are arranged in four stacked rings, resulting in a barrel-shaped structure. The two end rings are each formed by seven alpha subunits, and the two central rings are each formed by seven beta subunits. The catalytic chamber with the active sites is on the inside of the barrel.

It is found in the cytoplasm. It localises to the nucleus. The proteasome is a multicatalytic proteinase complex which is characterized by its ability to cleave peptides with Arg, Phe, Tyr, Leu, and Glu adjacent to the leaving group at neutral or slightly basic pH. The proteasome has an ATP-dependent proteolytic activity. In Petunia hybrida (Petunia), this protein is Proteasome subunit alpha type-4 (PAC1).